Here is a 294-residue protein sequence, read N- to C-terminus: F-box protein SKIP3 (294 aa).

The F-box domain occupies 21-67 (SSTLDSLPEGCISNIISFTSPEDACVAAAVSKIFESAVKSDIVWEKF).

Part of a SCF (SKP1-cullin-F-box) protein ligase complex. Interacts with SKP1A/ASK1.

It participates in protein modification; protein ubiquitination. The protein is F-box protein SKIP3 (SKIP3) of Arabidopsis thaliana (Mouse-ear cress).